The primary structure comprises 469 residues: Adenosylhomocysteinase (469 aa).

Substrate-binding residues include Thr-63, Asp-139, and Glu-164. Thr-165 to Thr-167 lines the NAD(+) pocket. Substrate contacts are provided by Lys-194 and Asp-198. NAD(+)-binding positions include Asn-199, Gly-228–Gly-233, Glu-251, Asn-300, Ile-321–His-323, and Asn-375.

It belongs to the adenosylhomocysteinase family. Requires NAD(+) as cofactor.

It is found in the cytoplasm. The catalysed reaction is S-adenosyl-L-homocysteine + H2O = L-homocysteine + adenosine. The protein operates within amino-acid biosynthesis; L-homocysteine biosynthesis; L-homocysteine from S-adenosyl-L-homocysteine: step 1/1. Its function is as follows. May play a key role in the regulation of the intracellular concentration of adenosylhomocysteine. In Ectopseudomonas mendocina (strain ymp) (Pseudomonas mendocina), this protein is Adenosylhomocysteinase.